A 404-amino-acid polypeptide reads, in one-letter code: GID complex subunit 9 (404 aa).

The region spanning 116-148 is the LisH domain; it reads SRVRLNRLVADYMMANGYHGAAALLCKDSQLEN. The CTLH domain occupies 154 to 211; the sequence is IYKRYQLIHDSILQQELKEVLSWCSEHRAILKKNNSTLELEVRLQRFIELIKSKKLCQ. Residues 317–389 form an RING-Gid-type zinc finger; that stretch reads CPVCTPCLND…REGFLRDPYS (73 aa).

It belongs to the FYV10 family. In terms of assembly, identified in the GID/CTLH complex. In the absence of stress, the complex exists as an inactive anticipatory complex (GID(Ant)), composed of Gid1, the E3 ubiquitin-ligase Gid2, Gid5, Gid8, and the RING-like subunit Gid9, awaiting a substrate receptor to form the active E3 ligase complex. When cells are shifted to glucose-containing medium, the substrate receptor Gid4 is induced and becomes part of the complex, named GID(SR4). Additionally, Gid7 transforms the GID(SR4) E3 ligase core into a higher-order supramolecular assembly (Chelator-GID(SR4)). Under osmotic or heat stress, the substrate receptor Gid10 is induced and becomes part of the complex, named GID(SR10).

It is found in the cytoplasm. Its subcellular location is the nucleus. It carries out the reaction S-ubiquitinyl-[E2 ubiquitin-conjugating enzyme]-L-cysteine + [acceptor protein]-L-lysine = [E2 ubiquitin-conjugating enzyme]-L-cysteine + N(6)-ubiquitinyl-[acceptor protein]-L-lysine.. Its pathway is protein modification; protein ubiquitination. In terms of biological role, component of the GID E3 ligase complex recruiting N termini and catalyzing ubiquitination of proteins targeted for degradation. GID E3 is regulated through assembly with interchangeable N-degron-binding substrate receptors induced by distinct environmental perturbations. Required for the adaptation to the presence of glucose in the growth medium; mediates in association with the substrate receptor VID24/GID4 the degradation of enzymes involved in gluconeogenesis when cells are shifted to glucose-containing medium. The polypeptide is GID complex subunit 9 (gid9) (Schizosaccharomyces pombe (strain 972 / ATCC 24843) (Fission yeast)).